Consider the following 424-residue polypeptide: Elongation factor 1-alpha (424 aa).

A tr-type G domain is found at 5-223 (KPHLNLITIG…DAFKVPEKPI (219 aa)). Positions 14-21 (GHVDHGKS) are G1. 14–21 (GHVDHGKS) serves as a coordination point for GTP. A Mg(2+)-binding site is contributed by S21. Positions 70–74 (GVTID) are G2. Positions 91-94 (DAPG) are G3. GTP-binding positions include 91 to 95 (DAPGH) and 148 to 151 (NKMD). Residues 148–151 (NKMD) are G4. A G5 region spans residues 187-189 (SGY).

Belongs to the TRAFAC class translation factor GTPase superfamily. Classic translation factor GTPase family. EF-Tu/EF-1A subfamily.

It is found in the cytoplasm. It carries out the reaction GTP + H2O = GDP + phosphate + H(+). In terms of biological role, GTP hydrolase that promotes the GTP-dependent binding of aminoacyl-tRNA to the A-site of ribosomes during protein biosynthesis. In Thermoplasma volcanium (strain ATCC 51530 / DSM 4299 / JCM 9571 / NBRC 15438 / GSS1), this protein is Elongation factor 1-alpha.